Reading from the N-terminus, the 506-residue chain is Histidine ammonia-lyase (506 aa).

Positions alanine 143–glycine 145 form a cross-link, 5-imidazolinone (Ala-Gly). A 2,3-didehydroalanine (Ser) modification is found at serine 144.

Belongs to the PAL/histidase family. Post-translationally, contains an active site 4-methylidene-imidazol-5-one (MIO), which is formed autocatalytically by cyclization and dehydration of residues Ala-Ser-Gly.

It is found in the cytoplasm. It carries out the reaction L-histidine = trans-urocanate + NH4(+). It functions in the pathway amino-acid degradation; L-histidine degradation into L-glutamate; N-formimidoyl-L-glutamate from L-histidine: step 1/3. This Salmonella schwarzengrund (strain CVM19633) protein is Histidine ammonia-lyase.